The primary structure comprises 206 residues: Cytidylate kinase (206 aa).

Position 7 to 15 (7 to 15 (GVAASGKSS)) interacts with ATP.

It belongs to the cytidylate kinase family. Type 1 subfamily.

Its subcellular location is the cytoplasm. The catalysed reaction is CMP + ATP = CDP + ADP. It carries out the reaction dCMP + ATP = dCDP + ADP. The polypeptide is Cytidylate kinase (Deinococcus radiodurans (strain ATCC 13939 / DSM 20539 / JCM 16871 / CCUG 27074 / LMG 4051 / NBRC 15346 / NCIMB 9279 / VKM B-1422 / R1)).